Reading from the N-terminus, the 338-residue chain is Holliday junction branch migration complex subunit RuvB (338 aa).

The tract at residues 1-180 (MTRLVTPDIT…FGVISRLEFY (180 aa)) is large ATPase domain (RuvB-L). Residues leucine 19, arginine 20, glycine 61, lysine 64, threonine 65, threonine 66, 127-129 (EDY), arginine 170, tyrosine 180, and arginine 217 contribute to the ATP site. Threonine 65 lines the Mg(2+) pocket. Residues 181–251 (TDDELTTIVT…VVDESLKLLE (71 aa)) are small ATPAse domain (RuvB-S). Positions 254–338 (EKGFDHMDRT…PPSSSQGNLF (85 aa)) are head domain (RuvB-H). Residues arginine 290, arginine 309, and arginine 314 each coordinate DNA.

This sequence belongs to the RuvB family. Homohexamer. Forms an RuvA(8)-RuvB(12)-Holliday junction (HJ) complex. HJ DNA is sandwiched between 2 RuvA tetramers; dsDNA enters through RuvA and exits via RuvB. An RuvB hexamer assembles on each DNA strand where it exits the tetramer. Each RuvB hexamer is contacted by two RuvA subunits (via domain III) on 2 adjacent RuvB subunits; this complex drives branch migration. In the full resolvosome a probable DNA-RuvA(4)-RuvB(12)-RuvC(2) complex forms which resolves the HJ.

The protein localises to the cytoplasm. It catalyses the reaction ATP + H2O = ADP + phosphate + H(+). The RuvA-RuvB-RuvC complex processes Holliday junction (HJ) DNA during genetic recombination and DNA repair, while the RuvA-RuvB complex plays an important role in the rescue of blocked DNA replication forks via replication fork reversal (RFR). RuvA specifically binds to HJ cruciform DNA, conferring on it an open structure. The RuvB hexamer acts as an ATP-dependent pump, pulling dsDNA into and through the RuvAB complex. RuvB forms 2 homohexamers on either side of HJ DNA bound by 1 or 2 RuvA tetramers; 4 subunits per hexamer contact DNA at a time. Coordinated motions by a converter formed by DNA-disengaged RuvB subunits stimulates ATP hydrolysis and nucleotide exchange. Immobilization of the converter enables RuvB to convert the ATP-contained energy into a lever motion, pulling 2 nucleotides of DNA out of the RuvA tetramer per ATP hydrolyzed, thus driving DNA branch migration. The RuvB motors rotate together with the DNA substrate, which together with the progressing nucleotide cycle form the mechanistic basis for DNA recombination by continuous HJ branch migration. Branch migration allows RuvC to scan DNA until it finds its consensus sequence, where it cleaves and resolves cruciform DNA. This Geobacter metallireducens (strain ATCC 53774 / DSM 7210 / GS-15) protein is Holliday junction branch migration complex subunit RuvB.